The primary structure comprises 514 residues: Putative binding protein HI_0213 (514 aa).

Residues 1–23 (MNNLFALCQRSAVIFSIIFTVVA) form the signal peptide. C24 carries the N-palmitoyl cysteine lipid modification. C24 carries S-diacylglycerol cysteine lipidation.

This sequence belongs to the bacterial solute-binding protein 5 family.

It is found in the cell membrane. Part of a binding-protein-dependent transport system. The sequence is that of Putative binding protein HI_0213 from Haemophilus influenzae (strain ATCC 51907 / DSM 11121 / KW20 / Rd).